The chain runs to 369 residues: 3-methylarginine biosynthesis aminotransferase ArgM (369 aa).

K216 carries the N6-(pyridoxal phosphate)lysine modification.

Belongs to the class-I pyridoxal-phosphate-dependent aminotransferase family. Requires pyridoxal 5'-phosphate as cofactor.

It carries out the reaction L-arginine + 2-oxoglutarate = 5-guanidino-2-oxopentanoate + L-glutamate. The catalysed reaction is (3R)-5-guanidino-3-methyl-2-oxopentanoate + L-aspartate = (3R)-3-methyl-L-arginine + oxaloacetate. The protein operates within antibiotic biosynthesis. Functionally, aminotransferase involved in the formation of the rare amino acid 3-methylarginine (MeArg), which is incorporated into the peptidyl nucleoside antibiotic arginomycin. Catalyzes two rounds of transamination: the transfer of the amino group from L-arginine to 2-oxoglutarate to give glutamate and 5-guanidino-2-oxopentanoic acid, which will be methylated by ArgN. Then, ArgM specifically catalyzes transamination from the donor L-aspartate to the 5-guanidino-3-methyl-2-oxopentanoic acid produced by ArgN, generating the final product, 3-methylarginine. Cannot use arginine analogs, such as D-arginine, L-homoarginine and N-methylarginine for the first transamination. This chain is 3-methylarginine biosynthesis aminotransferase ArgM, found in Streptomyces arginensis.